The primary structure comprises 111 residues: Resistin-like gamma (111 aa).

An N-terminal signal peptide occupies residues 1-23; sequence MKTAICSLLICIFLLQLMVPVNT. Disulfide bonds link Cys-55/Cys-108, Cys-67/Cys-107, Cys-76/Cys-93, Cys-78/Cys-95, and Cys-82/Cys-97.

It belongs to the resistin/FIZZ family. As to quaternary structure, homodimer. Heterodimer with RETNLB. In terms of tissue distribution, highly expressed in bone marrow, spleen and white blood cells. Also detected at low levels in thymus, lung, trachea, white adipose tissue, nasal respiratory epithelium, colon, small intestine, kidney, liver, and heart.

It localises to the secreted. Probable hormone. Promotes chemotaxis in myeloid cells. This Rattus norvegicus (Rat) protein is Resistin-like gamma.